Reading from the N-terminus, the 105-residue chain is Nucleoid-associated protein Ccur92_18190 (105 aa).

The protein belongs to the YbaB/EbfC family. As to quaternary structure, homodimer.

It is found in the cytoplasm. The protein resides in the nucleoid. In terms of biological role, binds to DNA and alters its conformation. May be involved in regulation of gene expression, nucleoid organization and DNA protection. The sequence is that of Nucleoid-associated protein Ccur92_18190 from Campylobacter curvus (strain 525.92).